Consider the following 388-residue polypeptide: Cystathionine gamma-synthase (388 aa).

The segment at 1–24 is disordered; sequence MSEDRTGHQGISGPATRAIHAGYR. At K208 the chain carries N6-(pyridoxal phosphate)lysine.

The protein belongs to the trans-sulfuration enzymes family. In terms of assembly, homotetramer. Pyridoxal 5'-phosphate serves as cofactor.

It localises to the cytoplasm. It carries out the reaction O-succinyl-L-homoserine + L-cysteine = L,L-cystathionine + succinate + H(+). Catalyzes the formation of L-cystathionine from O-succinyl-L-homoserine (OSHS) and L-cysteine, via a gamma-replacement reaction. In the absence of thiol, catalyzes gamma-elimination to form 2-oxobutanoate, succinate and ammonia. In Mycobacterium bovis (strain ATCC BAA-935 / AF2122/97), this protein is Cystathionine gamma-synthase (metB).